Reading from the N-terminus, the 231-residue chain is MAQSKHGLTKEMTMKYRMEGCVDGHKFVITGEGIGYPFKGKQAINLCVVEGGPLPFAEDILSAAFNYGNRVFTEYPQDIVDYFKNSCPAGYTWDRSFLFEDGAVCICNADITVSVEENCMYHESKFYGVNFPADGPVMKKMTDNWEPSCEKIIPVPKQGILKGDVSMYLLLKDGGRLRCQFDTVYKAKSVPRKMPDWHFIQHKLTREDRSDAKNQKWHLTEHAIASGSALP.

The segment at residues 66–68 (NYG) is a cross-link (5-imidazolinone (Asn-Gly)). Tyr67 is modified (2,3-didehydrotyrosine).

It belongs to the GFP family. Contains a chromophore consisting of modified amino acid residues. The chromophore is formed by autocatalytic backbone condensation between Xaa-N and Gly-(N+2), and oxidation of Tyr-(N+1) to didehydrotyrosine. Maturation of the chromophore requires nothing other than molecular oxygen. The precise stereochemistry of the tyrosine has not been determined. Tentacle and oral disk.

In terms of biological role, pigment protein that is yellow-green in color. The polypeptide is GFP-like fluorescent chromoprotein FP506 (Zoanthus sp. (Green polyp)).